The sequence spans 375 residues: uncharacterized protein (375 aa).

A run of 7 helical transmembrane segments spans residues 21 to 41 (LLLL…IVLF), 66 to 86 (IIVF…FCVS), 160 to 180 (LVGV…PGIV), 203 to 223 (LVGL…HLLI), 234 to 254 (FYMV…FHLF), 289 to 309 (VISF…YFLI), and 338 to 358 (FFLM…MLFF).

The protein localises to the cell membrane. This is an uncharacterized protein from Mycoplasma genitalium (strain ATCC 33530 / DSM 19775 / NCTC 10195 / G37) (Mycoplasmoides genitalium).